Here is an 882-residue protein sequence, read N- to C-terminus: Alanine--tRNA ligase (882 aa).

Zn(2+) contacts are provided by His-570, His-574, Cys-672, and His-676.

Belongs to the class-II aminoacyl-tRNA synthetase family. The cofactor is Zn(2+).

It is found in the cytoplasm. It carries out the reaction tRNA(Ala) + L-alanine + ATP = L-alanyl-tRNA(Ala) + AMP + diphosphate. Catalyzes the attachment of alanine to tRNA(Ala) in a two-step reaction: alanine is first activated by ATP to form Ala-AMP and then transferred to the acceptor end of tRNA(Ala). Also edits incorrectly charged Ser-tRNA(Ala) and Gly-tRNA(Ala) via its editing domain. The sequence is that of Alanine--tRNA ligase from Xanthomonas axonopodis pv. citri (strain 306).